The chain runs to 273 residues: Putative phosphoenolpyruvate synthase regulatory protein (273 aa).

Residue 153-160 (GVSRSGKT) participates in ADP binding.

The protein belongs to the pyruvate, phosphate/water dikinase regulatory protein family. PSRP subfamily.

It catalyses the reaction [pyruvate, water dikinase] + ADP = [pyruvate, water dikinase]-phosphate + AMP + H(+). The enzyme catalyses [pyruvate, water dikinase]-phosphate + phosphate + H(+) = [pyruvate, water dikinase] + diphosphate. Bifunctional serine/threonine kinase and phosphorylase involved in the regulation of the phosphoenolpyruvate synthase (PEPS) by catalyzing its phosphorylation/dephosphorylation. The chain is Putative phosphoenolpyruvate synthase regulatory protein from Albidiferax ferrireducens (strain ATCC BAA-621 / DSM 15236 / T118) (Rhodoferax ferrireducens).